Consider the following 806-residue polypeptide: Xylosyltransferase sqv-6 (806 aa).

At 1–11 (MLFNGTTKYRD) the chain is on the cytoplasmic side. The helical; Signal-anchor for type II membrane protein transmembrane segment at 12–32 (YAIVISLFFLLNVYLLYNTAQ) threads the bilayer. The Lumenal portion of the chain corresponds to 33-806 (HTQVGNSKHI…GYDEDTQTLI (774 aa)). Residues Cys57 and Cys85 are joined by a disulfide bond. Asn89 and Asn169 each carry an N-linked (GlcNAc...) asparagine glycan. 3 cysteine pairs are disulfide-bonded: Cys101-Cys445, Cys464-Cys478, and Cys466-Cys476. The 97-residue stretch at 109-205 (IDQRIGCFLD…FNAVEIFRTG (97 aa)) folds into the WSC domain. UDP-alpha-D-xylose-binding positions include Asp264 and 293–295 (TIW). N-linked (GlcNAc...) asparagine glycosylation is present at Asn325. 398-399 (DW) lines the UDP-alpha-D-xylose pocket. UDP-alpha-D-xylose contacts are provided by residues Ser479 and 505–506 (RK). Residues Asn614, Asn655, and Asn719 are each glycosylated (N-linked (GlcNAc...) asparagine). A disulfide bridge connects residues Cys772 and Cys778.

It belongs to the glycosyltransferase 14 family. XylT subfamily. Requires a divalent metal cation as cofactor.

The protein localises to the endoplasmic reticulum membrane. It localises to the golgi apparatus membrane. The enzyme catalyses UDP-alpha-D-xylose + L-seryl-[protein] = 3-O-(beta-D-xylosyl)-L-seryl-[protein] + UDP + H(+). The protein operates within glycan metabolism; chondroitin sulfate biosynthesis. It participates in glycan metabolism; heparan sulfate biosynthesis. Its function is as follows. Catalyzes the first step in biosynthesis of glycosaminoglycan. Transfers D-xylose from UDP-D-xylose to specific serine residues of the core protein. Required for vulval morphogenesis and zygotic cytokinesis, suggesting that glycosaminoglycans play a central role in vulval morphogenesis. The protein is Xylosyltransferase sqv-6 of Caenorhabditis elegans.